We begin with the raw amino-acid sequence, 248 residues long: Ribonuclease 3 (248 aa).

The region spanning 6–136 is the RNase III domain; that stretch reads LAYLQTLIGS…LIGAIYLDKG (131 aa). Glutamate 49 is a binding site for Mg(2+). Residue aspartate 53 is part of the active site. Residues aspartate 122 and glutamate 125 each contribute to the Mg(2+) site. The active site involves glutamate 125. Positions 163-231 constitute a DRBM domain; it reads NYKSCLIEYS…AKEAMERIIA (69 aa).

This sequence belongs to the ribonuclease III family. Homodimer. The cofactor is Mg(2+).

It is found in the cytoplasm. The enzyme catalyses Endonucleolytic cleavage to 5'-phosphomonoester.. Digests double-stranded RNA. Involved in the processing of primary rRNA transcript to yield the immediate precursors to the large and small rRNAs (23S and 16S). Processes some mRNAs, and tRNAs when they are encoded in the rRNA operon. Processes pre-crRNA and tracrRNA of type II CRISPR loci if present in the organism. This chain is Ribonuclease 3, found in Chlorobium chlorochromatii (strain CaD3).